A 244-amino-acid chain; its full sequence is Transcriptional regulatory protein YpdB (244 aa).

Residues 2 to 116 (KVIIVEDEFL…RITGMLQKLE (115 aa)) form the Response regulatory domain. At aspartate 53 the chain carries 4-aspartylphosphate. The HTH LytTR-type domain maps to 139–244 (INLVKDERII…VKEFRQLMHL (106 aa)).

Phosphorylated by YpdA.

The protein localises to the cytoplasm. Member of the two-component regulatory system YpdA/YpdB. YpdB regulates expression of yhjX by binding to its promoter region. This chain is Transcriptional regulatory protein YpdB (ypdB), found in Escherichia coli O157:H7.